Here is a 419-residue protein sequence, read N- to C-terminus: UDP-N-acetylglucosamine 1-carboxyvinyltransferase (419 aa).

A phosphoenolpyruvate-binding site is contributed by 22 to 23 (KN). Residue R92 participates in UDP-N-acetyl-alpha-D-glucosamine binding. C116 serves as the catalytic Proton donor. Position 116 is a 2-(S-cysteinyl)pyruvic acid O-phosphothioketal (C116). UDP-N-acetyl-alpha-D-glucosamine contacts are provided by residues 121-125 (RPIDQ), D305, and I327.

The protein belongs to the EPSP synthase family. MurA subfamily.

The protein resides in the cytoplasm. It carries out the reaction phosphoenolpyruvate + UDP-N-acetyl-alpha-D-glucosamine = UDP-N-acetyl-3-O-(1-carboxyvinyl)-alpha-D-glucosamine + phosphate. It participates in cell wall biogenesis; peptidoglycan biosynthesis. In terms of biological role, cell wall formation. Adds enolpyruvyl to UDP-N-acetylglucosamine. This is UDP-N-acetylglucosamine 1-carboxyvinyltransferase from Trichlorobacter lovleyi (strain ATCC BAA-1151 / DSM 17278 / SZ) (Geobacter lovleyi).